Here is a 174-residue protein sequence, read N- to C-terminus: Gamma-crystallin D (174 aa).

2 consecutive Beta/gamma crystallin 'Greek key' domains span residues 2–40 (GKITFYEDRGFQGRCYECSSDHVNLQSYFSRCNSIRVDS) and 41–83 (GCWM…RIIP). Positions 84 to 87 (YSGS) are connecting peptide. Beta/gamma crystallin 'Greek key' domains are found at residues 88-128 (HKMR…NVLD) and 129-171 (GCWI…RRVI).

The protein belongs to the beta/gamma-crystallin family. In terms of assembly, monomer.

Its function is as follows. Crystallins are the dominant structural components of the vertebrate eye lens. This is Gamma-crystallin D (CRYGD) from Macropus fuliginosus (Western gray kangaroo).